Reading from the N-terminus, the 954-residue chain is Mycolic acid-containing lipids exporter MmpL11 (954 aa).

The next 12 helical transmembrane spans lie at 11–31, 188–208, 214–234, 235–255, 279–299, 312–334, 373–393, 529–549, 559–579, 597–617, 648–668, and 670–690; these read FRWAVFATWLLLLVPSIYLAL, IVLIVLLAVFGSLAAAALPLV, VVVTMGLVYLLSMFTTMSVFV, TSTVSMFGIAVAIDYSLFILM, GLAVALSGLTVIASVTGIYLI, ILAVAVAVLTSTTLTPAVLATFG, AIAAAILLLVLAAPAFNMVLG, TQPLVFVFVALIAFVMLLVSI, VLMTVLSVAAAYGSLVVVFQW, IPPLVLAMTFGLSMDYEIFLL, AALIMIAVFIGFAFAGMPLVA, and LGVACAVAIAVDATVVRLVLV.

It is found in the cell inner membrane. Its function is as follows. Contributes to cell wall biosynthesis and biofilm formation. Transports the mycolic acid-containing lipids monomeromycolyl diacylglycerol (MMDAG) and mycolate ester wax (WE) to the bacterial surface. This chain is Mycolic acid-containing lipids exporter MmpL11, found in Mycolicibacterium smegmatis (strain ATCC 700084 / mc(2)155) (Mycobacterium smegmatis).